We begin with the raw amino-acid sequence, 86 residues long: MNYLILISFALLVITGVESARDAYIAKPHNCVYECFDAFSSYCNGVCTKNGAKSGYCQILGTYGNGCWCIALPDNVPIRIPGKCHR.

The N-terminal stretch at 1-19 (MNYLILISFALLVITGVES) is a signal peptide. Residues 21 to 85 (RDAYIAKPHN…VPIRIPGKCH (65 aa)) form the LCN-type CS-alpha/beta domain. Intrachain disulfides connect Cys-31–Cys-84, Cys-35–Cys-57, Cys-43–Cys-67, and Cys-47–Cys-69. Position 86 (Arg-86) is a propeptide, removed by a carboxypeptidase.

The protein belongs to the long (4 C-C) scorpion toxin superfamily. Sodium channel inhibitor family. Alpha subfamily. In terms of tissue distribution, expressed by the venom gland.

The protein localises to the secreted. Its function is as follows. Alpha toxins bind voltage-independently at site-3 of sodium channels (Nav) and inhibit the inactivation of the activated channels, thereby blocking neuronal transmission. This toxin inhibits inactivation of Nav1.6/SCN8A (EC(50)=790 nM) and drosophila DmNav1 (EC(50)=280 nM). The toxin (1 uM) does not significantly shift the midpoint of activation at the two channels, but induces a significant depolarizing shift in the V(1/2) of inactivation of the channels. Has antimicrobial activity. The polypeptide is Sodium channel neurotoxin MeuNaTxalpha-5 (Mesobuthus eupeus (Lesser Asian scorpion)).